Reading from the N-terminus, the 206-residue chain is Pyrrolidone-carboxylate peptidase 2 (206 aa).

Catalysis depends on residues glutamate 78, cysteine 141, and histidine 165.

The protein belongs to the peptidase C15 family. As to quaternary structure, homotetramer.

It is found in the cytoplasm. It catalyses the reaction Release of an N-terminal pyroglutamyl group from a polypeptide, the second amino acid generally not being Pro.. Its function is as follows. Removes 5-oxoproline from various penultimate amino acid residues except L-proline. This is Pyrrolidone-carboxylate peptidase 2 from Caldanaerobacter subterraneus subsp. tengcongensis (strain DSM 15242 / JCM 11007 / NBRC 100824 / MB4) (Thermoanaerobacter tengcongensis).